Here is a 162-residue protein sequence, read N- to C-terminus: Peptidyl-prolyl cis-trans isomerase-like 1 (162 aa).

Residues Met-1–Ile-155 form the PPIase cyclophilin-type domain.

Belongs to the cyclophilin-type PPIase family. PPIL1 subfamily.

The catalysed reaction is [protein]-peptidylproline (omega=180) = [protein]-peptidylproline (omega=0). Its function is as follows. PPIases accelerate the folding of proteins. It catalyzes the cis-trans isomerization of proline imidic peptide bonds in oligopeptides. This Aspergillus niger protein is Peptidyl-prolyl cis-trans isomerase-like 1 (cypC).